Reading from the N-terminus, the 161-residue chain is MQDAITSVINSADVQGKYLDGSAMDKLKAYFTTGALRVRAASTISANAAAIVKEAVAKSLLYSDVTRPGGNMYTTRRYAACIRDLDYYLRYATYAMLAGDPSILDERVLNGLKETYNSLGVPVGSTVQAIQAMKEVTAGLVGADAGREMGVYFDYICSGLS.

Asn-71 carries the post-translational modification N4-methylasparagine. (2R,3E)-phycocyanobilin is bound at residue Cys-81.

The protein belongs to the phycobiliprotein family. Heterodimer of an alpha and a beta chain. Post-translationally, contains one covalently linked phycocyanobilin chromophore. The chromophore is added by the phycocyanobilin lyase CpcUS.

The protein resides in the cellular thylakoid membrane. Functionally, light-harvesting photosynthetic bile pigment-protein from the phycobiliprotein complex. Allophycocyanin has a maximum absorption at approximately 650 nanometers. In Picosynechococcus sp. (strain ATCC 27264 / PCC 7002 / PR-6) (Agmenellum quadruplicatum), this protein is Allophycocyanin beta subunit (apcB).